The sequence spans 212 residues: Thymidylate kinase (212 aa).

Residue 10–17 participates in ATP binding; sequence GLEGAGKT.

The protein belongs to the thymidylate kinase family.

The catalysed reaction is dTMP + ATP = dTDP + ADP. Its function is as follows. Phosphorylation of dTMP to form dTDP in both de novo and salvage pathways of dTTP synthesis. The polypeptide is Thymidylate kinase (Yersinia pestis bv. Antiqua (strain Antiqua)).